Here is a 205-residue protein sequence, read N- to C-terminus: IQ domain-containing protein F1 (205 aa).

Composition is skewed to basic and acidic residues over residues 1 to 24 (MEEK…KEMP) and 51 to 68 (ANEK…LSDK). The tract at residues 1–68 (MEEKQPQKTK…PENQKKLSDK (68 aa)) is disordered. IQ domains are found at residues 68–97 (KDTV…SACI) and 124–153 (KEWA…AVRI).

Interacts with calmodulin.

Its subcellular location is the cytoplasmic vesicle. It localises to the secretory vesicle. The protein localises to the acrosome. Its function is as follows. Involved in sperm capacitation and acrosome reaction. This Homo sapiens (Human) protein is IQ domain-containing protein F1.